The following is a 65-amino-acid chain: Large ribosomal subunit protein bL35 (65 aa).

Belongs to the bacterial ribosomal protein bL35 family.

The polypeptide is Large ribosomal subunit protein bL35 (Buchnera aphidicola subsp. Acyrthosiphon pisum (strain 5A)).